The sequence spans 356 residues: Histidinol-phosphate aminotransferase (356 aa).

Position 214 is an N6-(pyridoxal phosphate)lysine (Lys-214).

This sequence belongs to the class-II pyridoxal-phosphate-dependent aminotransferase family. Histidinol-phosphate aminotransferase subfamily. As to quaternary structure, homodimer. Pyridoxal 5'-phosphate serves as cofactor.

It catalyses the reaction L-histidinol phosphate + 2-oxoglutarate = 3-(imidazol-4-yl)-2-oxopropyl phosphate + L-glutamate. It functions in the pathway amino-acid biosynthesis; L-histidine biosynthesis; L-histidine from 5-phospho-alpha-D-ribose 1-diphosphate: step 7/9. The chain is Histidinol-phosphate aminotransferase from Escherichia coli O127:H6 (strain E2348/69 / EPEC).